The sequence spans 385 residues: S-adenosylmethionine synthase (385 aa).

His16 is an ATP binding site. Asp18 lines the Mg(2+) pocket. K(+) is bound at residue Glu44. L-methionine-binding residues include Glu57 and Gln100. A flexible loop region spans residues 100 to 110; sequence QSPDINQGVDR. Residues 164–166, 230–231, Asp239, 245–246, Ala262, and Lys266 contribute to the ATP site; these read DGK, KF, and RK. L-methionine is bound at residue Asp239. Lys270 provides a ligand contact to L-methionine.

It belongs to the AdoMet synthase family. In terms of assembly, homotetramer; dimer of dimers. Requires Mg(2+) as cofactor. The cofactor is K(+).

It is found in the cytoplasm. It catalyses the reaction L-methionine + ATP + H2O = S-adenosyl-L-methionine + phosphate + diphosphate. It participates in amino-acid biosynthesis; S-adenosyl-L-methionine biosynthesis; S-adenosyl-L-methionine from L-methionine: step 1/1. Functionally, catalyzes the formation of S-adenosylmethionine (AdoMet) from methionine and ATP. The overall synthetic reaction is composed of two sequential steps, AdoMet formation and the subsequent tripolyphosphate hydrolysis which occurs prior to release of AdoMet from the enzyme. This Helicobacter pylori (strain J99 / ATCC 700824) (Campylobacter pylori J99) protein is S-adenosylmethionine synthase.